An 861-amino-acid chain; its full sequence is Putative glutamate--cysteine ligase 2-2 (861 aa).

Residues 1–372 (MSDARIVAVG…RDVPPAGAAA (372 aa)) are carboxylate-amine ligase. The tract at residues 373 to 861 (ALGSAPAVSA…GSKDTWIPRR (489 aa)) is unknown.

The protein in the N-terminal section; belongs to the glutamate--cysteine ligase type 2 family. YbdK subfamily.

It carries out the reaction L-cysteine + L-glutamate + ATP = gamma-L-glutamyl-L-cysteine + ADP + phosphate + H(+). Functionally, ATP-dependent carboxylate-amine ligase which exhibits weak glutamate--cysteine ligase activity. The polypeptide is Putative glutamate--cysteine ligase 2-2 (Frankia casuarinae (strain DSM 45818 / CECT 9043 / HFP020203 / CcI3)).